The following is a 1162-amino-acid chain: Transcription termination factor 2 (1162 aa).

Zn(2+) is bound by residues Cys-6, His-9, Cys-32, and Cys-37. The GRF-type zinc-finger motif lies at 6-46 (CPEHGTFCFLKTGVRDGPNKGKSFYVCRADTCSFVRATDIP). Disordered stretches follow at residues 97 to 116 (PDSK…ETFH), 142 to 358 (IKGE…EEDD), 388 to 407 (DRSV…KVEP), and 459 to 503 (LSPE…TQPV). Residues 105-116 (SNKSQHASETFH) show a composition bias toward polar residues. The segment covering 142 to 178 (IKGEGEEKKADKKQREKGDQLFDQKKEQKPEMMEKDL) has biased composition (basic and acidic residues). Residue Lys-143 forms a Glycyl lysine isopeptide (Lys-Gly) (interchain with G-Cter in SUMO2) linkage. Residues 219–232 (IKSQQCQGNELTRP) are compositionally biased toward polar residues. Residues 233–245 (SASSQEKSSGKSQ) are compositionally biased toward low complexity. Residues 246-258 (DVQRESEPLREKV) show a composition bias toward basic and acidic residues. Over residues 261-274 (LLPQNVHSHNSISK) the composition is skewed to polar residues. Positions 323–338 (PAPGGPAAQAAPAAPG) are enriched in low complexity. The span at 459 to 485 (LSPEQGTNEKSNSQVPQQSHFTKTTTG) shows a compositional bias: polar residues. Residue Ser-460 is modified to Phosphoserine. One can recognise a Helicase ATP-binding domain in the interval 583–786 (WRESQKPQGG…YSLLKFLRCS (204 aa)). ATP is bound at residue 596-603 (DDMGLGKT). A DEAH box motif is present at residues 737–740 (DEAH). The interval 871-890 (KRHESRGNQSGRSPNNPFSR) is disordered. The span at 877–888 (GNQSGRSPNNPF) shows a compositional bias: polar residues. Ser-883 and Ser-908 each carry phosphoserine. The 163-residue stretch at 995-1157 (SLLAELEAIQ…VTKLTLADLR (163 aa)) folds into the Helicase C-terminal domain.

The protein belongs to the SNF2/RAD54 helicase family. In terms of assembly, interacts with CDC5L. Part of the spliceosome.

The protein localises to the cytoplasm. It is found in the nucleus. Its function is as follows. DsDNA-dependent ATPase which acts as a transcription termination factor by coupling ATP hydrolysis with removal of RNA polymerase II from the DNA template. May contribute to mitotic transcription repression. May also be involved in pre-mRNA splicing. This Homo sapiens (Human) protein is Transcription termination factor 2 (TTF2).